The following is a 305-amino-acid chain: Tyrosine recombinase XerC (305 aa).

Residues 1-93 enclose the Core-binding (CB) domain; it reads MVLDGFAAYF…AWRQYCAWLV (93 aa). Residues 114–294 enclose the Tyr recombinase domain; sequence RVPKALPQEW…DFDHIARLYD (181 aa). Active-site residues include Arg155, Lys179, His246, Arg249, and His272. Catalysis depends on Tyr281, which acts as the O-(3'-phospho-DNA)-tyrosine intermediate.

Belongs to the 'phage' integrase family. XerC subfamily. Forms a cyclic heterotetrameric complex composed of two molecules of XerC and two molecules of XerD.

The protein localises to the cytoplasm. Site-specific tyrosine recombinase, which acts by catalyzing the cutting and rejoining of the recombining DNA molecules. The XerC-XerD complex is essential to convert dimers of the bacterial chromosome into monomers to permit their segregation at cell division. It also contributes to the segregational stability of plasmids. This Neisseria gonorrhoeae (strain ATCC 700825 / FA 1090) protein is Tyrosine recombinase XerC.